The chain runs to 340 residues: MIFIDACFKKPTPYTPIWMMRQAGRYLPEYMEVRKQAGDFLSLCKDYKKASEVSLQPIDILDVDAAIIFSDILVVPLEMGMNLRFEKGEGPIFDNPISTLEDLEKLDDQNAHKKLNYVYDALKLTREKLSQNKALIGFCGSPWTIATYMIEGSGSKNYAKCKKMLYQNPELLHKILNKLTQVLKLYLEEQIKAGANAIQIFDSWASALEYDKFFEFSFNYMLEISNFIKSKYPNIPVILFPKGISGYLDRIDGNFDVFGVDWSTPLDLARDKLSHKYTLQGNMEPCRLYDKNAIKEGVEKILKTMQNKAHIFNLGHGILPDIPVENAKYFIKLVQESSAK.

Residues 21–25 (RQAGR), aspartate 71, tyrosine 148, serine 203, and histidine 316 contribute to the substrate site.

The protein belongs to the uroporphyrinogen decarboxylase family. Homodimer.

It is found in the cytoplasm. The enzyme catalyses uroporphyrinogen III + 4 H(+) = coproporphyrinogen III + 4 CO2. Its pathway is porphyrin-containing compound metabolism; protoporphyrin-IX biosynthesis; coproporphyrinogen-III from 5-aminolevulinate: step 4/4. Functionally, catalyzes the decarboxylation of four acetate groups of uroporphyrinogen-III to yield coproporphyrinogen-III. The sequence is that of Uroporphyrinogen decarboxylase from Campylobacter jejuni subsp. jejuni serotype O:23/36 (strain 81-176).